Reading from the N-terminus, the 670-residue chain is Protein-glutamine gamma-glutamyltransferase 4 (670 aa).

2 N-linked (GlcNAc...) asparagine glycosylation sites follow: N151 and N219. The active site involves C255. The N-linked (GlcNAc...) asparagine glycan is linked to N288. Residues H314 and D337 contribute to the active site. Residues N377, D379, E429, and E434 each coordinate Ca(2+). 2 N-linked (GlcNAc...) asparagine glycosylation sites follow: N456 and N491.

The protein belongs to the transglutaminase superfamily. Transglutaminase family. In terms of assembly, homodimer. Ca(2+) serves as cofactor. Expressed in the coagulating gland and in the dorsal part of the prostate. Not expressed in the brain, heart, kidney, liver, lung, muscle, pancreas, spleen, stomach, testis and thymus.

The protein resides in the secreted. The catalysed reaction is L-glutaminyl-[protein] + L-lysyl-[protein] = [protein]-L-lysyl-N(6)-5-L-glutamyl-[protein] + NH4(+). Its function is as follows. Associated with the mammalian reproductive process. Plays an important role in the formation of the seminal coagulum through the cross-linking of specific proteins present in the seminal plasma. Transglutaminase is also required to stabilize the copulatory plug. The polypeptide is Protein-glutamine gamma-glutamyltransferase 4 (Mus musculus (Mouse)).